A 370-amino-acid chain; its full sequence is Peptide chain release factor 2 (370 aa).

An N5-methylglutamine modification is found at Gln-249.

This sequence belongs to the prokaryotic/mitochondrial release factor family. In terms of processing, methylated by PrmC. Methylation increases the termination efficiency of RF2.

The protein localises to the cytoplasm. In terms of biological role, peptide chain release factor 2 directs the termination of translation in response to the peptide chain termination codons UGA and UAA. In Kosmotoga olearia (strain ATCC BAA-1733 / DSM 21960 / TBF 19.5.1), this protein is Peptide chain release factor 2.